The primary structure comprises 508 residues: Anthranilate synthase component 1 (508 aa).

Residues Ser51 and 283 to 285 (PYM) each bind L-tryptophan. Position 323–324 (323–324 (GT)) interacts with chorismate. Position 350 (Glu350) interacts with Mg(2+). Chorismate is bound by residues Tyr438, Arg458, 477 to 479 (GAG), and Gly479. A Mg(2+)-binding site is contributed by Glu492.

It belongs to the anthranilate synthase component I family. As to quaternary structure, heterotetramer consisting of two non-identical subunits: a beta subunit (TrpG) and a large alpha subunit (TrpE). It depends on Mg(2+) as a cofactor.

The catalysed reaction is chorismate + L-glutamine = anthranilate + pyruvate + L-glutamate + H(+). It functions in the pathway amino-acid biosynthesis; L-tryptophan biosynthesis; L-tryptophan from chorismate: step 1/5. Its activity is regulated as follows. Feedback inhibited by tryptophan. Functionally, part of a heterotetrameric complex that catalyzes the two-step biosynthesis of anthranilate, an intermediate in the biosynthesis of L-tryptophan. In the first step, the glutamine-binding beta subunit (TrpG) of anthranilate synthase (AS) provides the glutamine amidotransferase activity which generates ammonia as a substrate that, along with chorismate, is used in the second step, catalyzed by the large alpha subunit of AS (TrpE) to produce anthranilate. In the absence of TrpG, TrpE can synthesize anthranilate directly from chorismate and high concentrations of ammonia. This is Anthranilate synthase component 1 (trpE) from Synechocystis sp. (strain ATCC 27184 / PCC 6803 / Kazusa).